Here is a 306-residue protein sequence, read N- to C-terminus: Methionyl-tRNA formyltransferase (306 aa).

(6S)-5,6,7,8-tetrahydrofolate is bound at residue 110–113; sequence SLLP.

This sequence belongs to the Fmt family.

The catalysed reaction is L-methionyl-tRNA(fMet) + (6R)-10-formyltetrahydrofolate = N-formyl-L-methionyl-tRNA(fMet) + (6S)-5,6,7,8-tetrahydrofolate + H(+). In terms of biological role, attaches a formyl group to the free amino group of methionyl-tRNA(fMet). The formyl group appears to play a dual role in the initiator identity of N-formylmethionyl-tRNA by promoting its recognition by IF2 and preventing the misappropriation of this tRNA by the elongation apparatus. This Brucella anthropi (strain ATCC 49188 / DSM 6882 / CCUG 24695 / JCM 21032 / LMG 3331 / NBRC 15819 / NCTC 12168 / Alc 37) (Ochrobactrum anthropi) protein is Methionyl-tRNA formyltransferase.